Consider the following 525-residue polypeptide: ATP synthase subunit alpha (525 aa).

Residue 171-178 (GDRQTGKS) participates in ATP binding.

Belongs to the ATPase alpha/beta chains family. In terms of assembly, F-type ATPases have 2 components, CF(1) - the catalytic core - and CF(0) - the membrane proton channel. CF(1) has five subunits: alpha(3), beta(3), gamma(1), delta(1), epsilon(1). CF(0) has three main subunits: a(1), b(2) and c(9-12). The alpha and beta chains form an alternating ring which encloses part of the gamma chain. CF(1) is attached to CF(0) by a central stalk formed by the gamma and epsilon chains, while a peripheral stalk is formed by the delta and b chains.

The protein localises to the cell inner membrane. It carries out the reaction ATP + H2O + 4 H(+)(in) = ADP + phosphate + 5 H(+)(out). In terms of biological role, produces ATP from ADP in the presence of a proton gradient across the membrane. The alpha chain is a regulatory subunit. This is ATP synthase subunit alpha from Flavobacterium johnsoniae (strain ATCC 17061 / DSM 2064 / JCM 8514 / BCRC 14874 / CCUG 350202 / NBRC 14942 / NCIMB 11054 / UW101) (Cytophaga johnsonae).